Here is a 257-residue protein sequence, read N- to C-terminus: Nickel import system ATP-binding protein NikD (257 aa).

The 242-residue stretch at 4-245 folds into the ABC transporter domain; it reads IDIQNLTIKN…HLHPYTERLI (242 aa). 37-44 is an ATP binding site; it reads GESGAGKS.

It belongs to the ABC transporter superfamily. The complex is composed of two ATP-binding proteins (NikD and NikE), two transmembrane proteins (NikB and NikC) and a solute-binding protein (NikA).

The protein localises to the cell membrane. The enzyme catalyses Ni(2+)(out) + ATP + H2O = Ni(2+)(in) + ADP + phosphate + H(+). In terms of biological role, part of the ABC transporter complex NikABCDE (Opp2) involved in nickel import. Probably responsible for energy coupling to the transport system. This Staphylococcus aureus (strain MRSA252) protein is Nickel import system ATP-binding protein NikD.